The chain runs to 312 residues: Nucleosome assembly protein 1-like 4 (312 aa).

A coiled-coil region spans residues 24–78 (VETLKNKLQALAEQHVDVLESLAPSVRKRVDVLMEIQSQHDELEVKFFEEKAALE). The short motif at 45–60 (LAPSVRKRVDVLMEIQ) is the Nuclear export signal element. Residues 288-312 (EDYGASWVDDEEEDDNDDEYSDEEA) form a disordered region.

It belongs to the nucleosome assembly protein (NAP) family.

The protein resides in the nucleus. It is found in the cytoplasm. May modulate chromatin structure by regulation of nucleosome assembly/disassembly. In Oryza sativa subsp. indica (Rice), this protein is Nucleosome assembly protein 1-like 4.